The primary structure comprises 135 residues: Translation initiation factor 2 subunit beta (135 aa).

Belongs to the eIF-2-beta/eIF-5 family. As to quaternary structure, heterotrimer composed of an alpha, a beta and a gamma chain.

In terms of biological role, eIF-2 functions in the early steps of protein synthesis by forming a ternary complex with GTP and initiator tRNA. In Methanothermobacter thermautotrophicus (strain ATCC 29096 / DSM 1053 / JCM 10044 / NBRC 100330 / Delta H) (Methanobacterium thermoautotrophicum), this protein is Translation initiation factor 2 subunit beta (eif2b).